A 350-amino-acid chain; its full sequence is N-acetyllactosaminide beta-1,3-N-acetylglucosaminyltransferase 4 (350 aa).

At M1–R4 the chain is on the cytoplasmic side. The helical; Signal-anchor for type II membrane protein transmembrane segment at L5–K25 threads the bilayer. Over E26–P350 the chain is Lumenal. 2 N-linked (GlcNAc...) asparagine glycosylation sites follow: N53 and N166.

Belongs to the glycosyltransferase 31 family.

The protein localises to the golgi apparatus membrane. It catalyses the reaction a beta-D-galactosyl-(1-&gt;4)-N-acetyl-beta-D-glucosaminyl derivative + UDP-N-acetyl-alpha-D-glucosamine = an N-acetyl-beta-D-glucosaminyl-(1-&gt;3)-beta-D-galactosyl-(1-&gt;4)-N-acetyl-beta-D-glucosaminyl derivative + UDP + H(+). It participates in protein modification; protein glycosylation. Beta-1,3-N-acetylglucosaminyltransferase involved in the synthesis of poly-N-acetyllactosamine. Has activity for type 2 oligosaccharides. The chain is N-acetyllactosaminide beta-1,3-N-acetylglucosaminyltransferase 4 (B3gnt4) from Mus musculus (Mouse).